The primary structure comprises 216 residues: Cyclin-U4-2 (216 aa).

The protein belongs to the cyclin family. Cyclin U/P subfamily. In terms of assembly, interacts with CDKA-1. Expressed in roots, stems and flowers. Expressed in the shoot apex, leaf primordia and young leaves.

This Arabidopsis thaliana (Mouse-ear cress) protein is Cyclin-U4-2 (CYCU4-2).